The chain runs to 530 residues: MARLCTHTESGHYLMALDAGTGSVRAVIFDLQGKQIAVGQAEWQHLAVPDVPGSMEFDLAKNWQLACQCIRQALQKAAIPATAIAAVSACSMREGIVIYDSNGEPIWACANVDARAAHEVSELKELHDNTFEEEVYRCSGQTLALSAIPRLLWLAHHRPDIYHRASTVTMISDWMAFMLSGELAVDPSNAGTTGLLDLVTRNWKRSLLQMAGLRSDILSPVKETGTLLGHISQKAAEQCDLQAGTPVIVGGGDVQLGCLGLGVVRPAQTAVLGGTFWQQVVNLPAPVTDPNMNVRINPHVIPGMVQTESISFFTGLTMRWFRDAFCAEEKLIAERLGIDAYSLLEDMASRVPPGAYGVMPIFSDVMRFKRWYHAAPSFINLSIDPEKCNKATLFRALEENAAIVSACNLQQIAAFSGVQADSLVFAGGGSKGKLWSQILADVTGLTVHVPVVKEATALGCAIAAGVGVGVWSSLAETGEKLVRWDREHKPNPENFAVYQQAREKWQAVYQDQRALVDGGLTTSLWKAPGL.

This sequence belongs to the FGGY kinase family.

The protein localises to the cytoplasm. It carries out the reaction (S)-4,5-dihydroxypentane-2,3-dione + ATP = (2S)-2-hydroxy-3,4-dioxopentyl phosphate + ADP + H(+). Functionally, catalyzes the phosphorylation of autoinducer-2 (AI-2) to phospho-AI-2, which subsequently inactivates the transcriptional regulator LsrR and leads to the transcription of the lsr operon. Phosphorylates the ring-open form of (S)-4,5-dihydroxypentane-2,3-dione (DPD), which is the precursor to all AI-2 signaling molecules, at the C5 position. This is Autoinducer-2 kinase from Salmonella paratyphi B (strain ATCC BAA-1250 / SPB7).